Consider the following 306-residue polypeptide: Ornithine carbamoyltransferase (306 aa).

Carbamoyl phosphate contacts are provided by residues 53 to 56, glutamine 80, arginine 104, and 131 to 134; these read STRT and HPCQ. Residues asparagine 162, aspartate 220, and 224-225 contribute to the L-ornithine site; that span reads SM. Residues 260–261 and arginine 288 each bind carbamoyl phosphate; that span reads CL.

It belongs to the aspartate/ornithine carbamoyltransferase superfamily. OTCase family.

The protein resides in the cytoplasm. The catalysed reaction is carbamoyl phosphate + L-ornithine = L-citrulline + phosphate + H(+). It functions in the pathway amino-acid biosynthesis; L-arginine biosynthesis; L-arginine from L-ornithine and carbamoyl phosphate: step 1/3. Reversibly catalyzes the transfer of the carbamoyl group from carbamoyl phosphate (CP) to the N(epsilon) atom of ornithine (ORN) to produce L-citrulline. This is Ornithine carbamoyltransferase from Dechloromonas aromatica (strain RCB).